A 227-amino-acid polypeptide reads, in one-letter code: Cytidylate kinase (227 aa).

Residue 7 to 15 (GPSGAGKGT) coordinates ATP.

The protein belongs to the cytidylate kinase family. Type 1 subfamily.

It is found in the cytoplasm. It carries out the reaction CMP + ATP = CDP + ADP. The catalysed reaction is dCMP + ATP = dCDP + ADP. This Actinobacillus succinogenes (strain ATCC 55618 / DSM 22257 / CCUG 43843 / 130Z) protein is Cytidylate kinase.